Here is a 619-residue protein sequence, read N- to C-terminus: MNLKGKTLKELEEVSLSIRERILEVVSHNGGHLSSTLGAVELIVGMHAVFDSSRDPFIFDVSHQAYAHKLLTGRWEEFATLRQFEGVSGFTKPSESEHDYFIAGHSSTSISLAVGAAKAISLSLEKNRMPVVLIGDGSMSAGLCYEALNELGDRKYPMVILLNDNEMSIAEPIGAISKYLSQAIAGRFFQSIKGKVEKLLAHLPEGASYMAKRFEESLKLITPGILFEELGLEYIGPIDGHNLKEIIETLRIAKAMNKPVIIHAQTLKGKGYKIAEGPREHWHGVGPFDLSSGEPLKKPCSSSPTDIFSRTLLELAKEDEKVVGVTAAMPSGTGLSALVHEFPNRFWDVAIAEQHAVTSMAALAKEGYKPFVAIYSTFLQRAYDQIIHDVGIMKLPVKFAIDRGGIVGEDGETHQGILDIGYLRLIPHMTLMAPRSNESLKEAVKFAKDFSLGPIAFRYPRKSFVLQEGIFSESPFLYGKAERLMEGKDEVLFVGFGNGVGRAYEVSKVMASEYEVGLVDLRFVKPLDHETLWELSKEYRYWLVFSDASKVGGVASALLEWKAEVGAEVEILSMELEDEYIQHGKVEQVEEEIGFDVKGLSQKVRERLERIANSQRLLV.

Thiamine diphosphate contacts are provided by residues His-63 and 104 to 106 (GHS). Mg(2+) is bound at residue Asp-136. Residues 137–138 (GS), Asn-165, Tyr-272, and Glu-353 each bind thiamine diphosphate. Position 165 (Asn-165) interacts with Mg(2+).

It belongs to the transketolase family. DXPS subfamily. As to quaternary structure, homodimer. The cofactor is Mg(2+). It depends on thiamine diphosphate as a cofactor.

It carries out the reaction D-glyceraldehyde 3-phosphate + pyruvate + H(+) = 1-deoxy-D-xylulose 5-phosphate + CO2. It functions in the pathway metabolic intermediate biosynthesis; 1-deoxy-D-xylulose 5-phosphate biosynthesis; 1-deoxy-D-xylulose 5-phosphate from D-glyceraldehyde 3-phosphate and pyruvate: step 1/1. Catalyzes the acyloin condensation reaction between C atoms 2 and 3 of pyruvate and glyceraldehyde 3-phosphate to yield 1-deoxy-D-xylulose-5-phosphate (DXP). The protein is 1-deoxy-D-xylulose-5-phosphate synthase of Wolinella succinogenes (strain ATCC 29543 / DSM 1740 / CCUG 13145 / JCM 31913 / LMG 7466 / NCTC 11488 / FDC 602W) (Vibrio succinogenes).